A 448-amino-acid chain; its full sequence is Glucose-6-phosphate isomerase (448 aa).

Glu-291 functions as the Proton donor in the catalytic mechanism. Active-site residues include His-312 and Lys-425.

The protein belongs to the GPI family.

It localises to the cytoplasm. It catalyses the reaction alpha-D-glucose 6-phosphate = beta-D-fructose 6-phosphate. Its pathway is carbohydrate biosynthesis; gluconeogenesis. It functions in the pathway carbohydrate degradation; glycolysis; D-glyceraldehyde 3-phosphate and glycerone phosphate from D-glucose: step 2/4. In terms of biological role, catalyzes the reversible isomerization of glucose-6-phosphate to fructose-6-phosphate. This chain is Glucose-6-phosphate isomerase, found in Symbiobacterium thermophilum (strain DSM 24528 / JCM 14929 / IAM 14863 / T).